We begin with the raw amino-acid sequence, 197 residues long: MEISASLVKQLRDETGAGFMECKKALEETGGDLEKAKLVLKEKGLARAEKKIGRAASQGLIHAYIHGEGKLGVLVEVNCETDFVARTDDFKELVHEIALQIAGMAPEYVAVEDVPEEVIEQEKEIYRKQAENEGKPAEIIDKIVEGKLQNFYKSKVLLEQPYVRDDSKTIKDLIKEKIALLGENIVVRRFVRWTLGE.

Positions 81 to 84 (TDFV) are involved in Mg(2+) ion dislocation from EF-Tu.

The protein belongs to the EF-Ts family.

The protein localises to the cytoplasm. Its function is as follows. Associates with the EF-Tu.GDP complex and induces the exchange of GDP to GTP. It remains bound to the aminoacyl-tRNA.EF-Tu.GTP complex up to the GTP hydrolysis stage on the ribosome. The protein is Elongation factor Ts of Coprothermobacter proteolyticus (strain ATCC 35245 / DSM 5265 / OCM 4 / BT).